Reading from the N-terminus, the 271-residue chain is Formamidopyrimidine-DNA glycosylase (271 aa).

Pro2 functions as the Schiff-base intermediate with DNA in the catalytic mechanism. The active-site Proton donor is the Glu3. Residue Lys58 is the Proton donor; for beta-elimination activity of the active site. The DNA site is built by His92, Arg111, and Arg152. The FPG-type zinc finger occupies 237–271 (SVYGREGEACKQCGRVLKHATIGQRATVWCGSCQR). The active-site Proton donor; for delta-elimination activity is Arg261.

The protein belongs to the FPG family. Monomer. The cofactor is Zn(2+).

The catalysed reaction is Hydrolysis of DNA containing ring-opened 7-methylguanine residues, releasing 2,6-diamino-4-hydroxy-5-(N-methyl)formamidopyrimidine.. The enzyme catalyses 2'-deoxyribonucleotide-(2'-deoxyribose 5'-phosphate)-2'-deoxyribonucleotide-DNA = a 3'-end 2'-deoxyribonucleotide-(2,3-dehydro-2,3-deoxyribose 5'-phosphate)-DNA + a 5'-end 5'-phospho-2'-deoxyribonucleoside-DNA + H(+). Involved in base excision repair of DNA damaged by oxidation or by mutagenic agents. Acts as a DNA glycosylase that recognizes and removes damaged bases. Has a preference for oxidized purines, such as 7,8-dihydro-8-oxoguanine (8-oxoG). Has AP (apurinic/apyrimidinic) lyase activity and introduces nicks in the DNA strand. Cleaves the DNA backbone by beta-delta elimination to generate a single-strand break at the site of the removed base with both 3'- and 5'-phosphates. The polypeptide is Formamidopyrimidine-DNA glycosylase (Xanthomonas euvesicatoria pv. vesicatoria (strain 85-10) (Xanthomonas campestris pv. vesicatoria)).